The following is a 341-amino-acid chain: Ribose-phosphate pyrophosphokinase 5 (341 aa).

3 residues coordinate Mg(2+): Asp152, His154, and Asp167.

Belongs to the ribose-phosphate pyrophosphokinase family.

The protein localises to the cytoplasm. The enzyme catalyses D-ribose 5-phosphate + ATP = 5-phospho-alpha-D-ribose 1-diphosphate + AMP + H(+). It functions in the pathway metabolic intermediate biosynthesis; 5-phospho-alpha-D-ribose 1-diphosphate biosynthesis; 5-phospho-alpha-D-ribose 1-diphosphate from D-ribose 5-phosphate (route I): step 1/1. In terms of biological role, 5-phosphoribose 1-diphosphate synthase involved in nucleotide, histidine, and tryptophan biosynthesis. Active in heteromultimeric complexes with other 5-phosphoribose 1-diphosphate synthases. This Schizosaccharomyces pombe (strain 972 / ATCC 24843) (Fission yeast) protein is Ribose-phosphate pyrophosphokinase 5.